A 378-amino-acid polypeptide reads, in one-letter code: Ecotin-like protein 3 (378 aa).

2 disordered regions span residues 191–216 and 238–378; these read HRLS…HAAP and PQNN…KADP. Residues 274–287 are compositionally biased toward polar residues; that stretch reads NEPSPSRPRLSSTE. Residues 337–348 show a composition bias toward basic and acidic residues; sequence RKAEDNVYEKTM. The segment covering 362–378 has biased composition (low complexity); it reads KASASSKKSGNGSKADP.

It belongs to the protease inhibitor I11 (ecotin) family.

The chain is Ecotin-like protein 3 from Leishmania infantum.